The primary structure comprises 91 residues: Acylphosphatase (91 aa).

Residues 5–91 (RAHLRIYGRV…EGLEGFKVVG (87 aa)) enclose the Acylphosphatase-like domain. Residues R20 and N38 contribute to the active site.

This sequence belongs to the acylphosphatase family.

It carries out the reaction an acyl phosphate + H2O = a carboxylate + phosphate + H(+). This chain is Acylphosphatase (acyP), found in Thermococcus kodakarensis (strain ATCC BAA-918 / JCM 12380 / KOD1) (Pyrococcus kodakaraensis (strain KOD1)).